We begin with the raw amino-acid sequence, 87 residues long: Small ribosomal subunit protein bS20 (87 aa).

Residues 1-20 (MANHKSAEKRARQTIKKTER) form a disordered region.

Belongs to the bacterial ribosomal protein bS20 family.

In terms of biological role, binds directly to 16S ribosomal RNA. The chain is Small ribosomal subunit protein bS20 from Campylobacter jejuni subsp. jejuni serotype O:2 (strain ATCC 700819 / NCTC 11168).